The following is a 299-amino-acid chain: Recombination-associated protein RdgC (299 aa).

Belongs to the RdgC family.

It is found in the cytoplasm. The protein localises to the nucleoid. Functionally, may be involved in recombination. The chain is Recombination-associated protein RdgC from Bordetella bronchiseptica (strain ATCC BAA-588 / NCTC 13252 / RB50) (Alcaligenes bronchisepticus).